Consider the following 575-residue polypeptide: Acetylcholine receptor subunit beta-type acr-2 (575 aa).

The signal sequence occupies residues 1–20 (MKKTVKILLILITVFLKVHC). Residues 21–270 (NGGHDDEAAD…IRRKTLFYTV (250 aa)) lie on the Extracellular side of the membrane. Residues 31 to 57 (FLSHTNIDDPNNSSDPNKNSDQGDTMG) are disordered. The span at 38 to 50 (DDPNNSSDPNKNS) shows a compositional bias: low complexity. N41, N42, N80, and N131 each carry an N-linked (GlcNAc...) asparagine glycan. Cysteines 185 and 199 form a disulfide. 3 helical membrane passes run 271-291 (ILIIPTVLMAFLSVMAFYLPV), 299-319 (LTISLLLALVVFLLLVSKILP), and 331-351 (LLLAFVLNITAVVGTVVIVNI). Over 352-527 (YFRSALSHKM…WKYVAMVLDR (176 aa)) the chain is Cytoplasmic. The chain crosses the membrane as a helical span at residues 528-548 (LILLIFFGVTLGGTLGIICSA).

It belongs to the ligand-gated ion channel (TC 1.A.9) family. Acetylcholine receptor (TC 1.A.9.1) subfamily. Component of nicotinic acetylcholine receptor. In cholinergic motoneurons, composed of 2 non-alpha subunits acr-2 and acr-3, and 3 alpha subunits unc-38, unc-63 and acr-12. In terms of tissue distribution, specifically expressed in cholinergic ventral cord motoneurons of the VA, VB, DA and DB classes but not AS and VC classes. Expressed in PVQ and DVC neurons in the tail.

It is found in the postsynaptic cell membrane. Its subcellular location is the cell membrane. In terms of biological role, non-alpha subunit of nicotinic acetylcholine receptor (nAChR). Acts in cholinergic motoneurons to regulate presynaptic neurotransmitter release, thereby ensuring normal level of excitation of cholinergic motoneurons during locomotion. This is Acetylcholine receptor subunit beta-type acr-2 (acr-2) from Caenorhabditis elegans.